The following is a 382-amino-acid chain: MKLHEYEAKELFSKYGVKIPPGRVATTPEEVRKIAEEIGGPVVLKAQVVVAGRGKAGGIKVAKTPEEAYELATKMFGMNIKGLVVKKIYVTKYVEVEREMYLSLIIDRATRRYLFLASPIGGVDIEEIAKTQPEKIKRVYVDPSVGLRDYHVRSIVLWLGFKPETPQWRQASSIVQAMYNIMVDYDAELVESNPLAVTREGDVIPLDARVIVDDNALYKHPELEKALEEDPRDVSEFEMYAKKIGFHYVELDGDVGIIGNGAGLTMATMDLVYHFGGRPANFLDIGGGASRDVVKEALKVLLRHPRVKVIFMNIFGGITRADEVAAGVEAALAEEGGTKKKIVVRMKGTNEELGRQMLAKLGIPLYENAEEAAQKAVELARA.

One can recognise an ATP-grasp domain in the interval 9–240 (KELFSKYGVK…PRDVSEFEMY (232 aa)). ATP contacts are provided by residues K45, 52-54 (GRG), V94, and E99. Residues N193 and D207 each contribute to the Mg(2+) site. Substrate contacts are provided by residues N260 and 317-319 (GIT).

Belongs to the succinate/malate CoA ligase beta subunit family. Heterotetramer of two alpha and two beta subunits. The cofactor is Mg(2+).

The catalysed reaction is succinate + ATP + CoA = succinyl-CoA + ADP + phosphate. The enzyme catalyses GTP + succinate + CoA = succinyl-CoA + GDP + phosphate. It participates in carbohydrate metabolism; tricarboxylic acid cycle; succinate from succinyl-CoA (ligase route): step 1/1. Its function is as follows. Succinyl-CoA synthetase functions in the citric acid cycle (TCA), coupling the hydrolysis of succinyl-CoA to the synthesis of either ATP or GTP and thus represents the only step of substrate-level phosphorylation in the TCA. The beta subunit provides nucleotide specificity of the enzyme and binds the substrate succinate, while the binding sites for coenzyme A and phosphate are found in the alpha subunit. The chain is Succinate--CoA ligase [ADP-forming] subunit beta from Pyrobaculum arsenaticum (strain DSM 13514 / JCM 11321 / PZ6).